The sequence spans 62 residues: Toxin Tst2 (62 aa).

Positions 1-62 (KEGYAMDHEG…KVWDYATNKC (62 aa)) constitute an LCN-type CS-alpha/beta domain. 4 disulfide bridges follow: C11–C62, C15–C38, C23–C43, and C27–C45. C62 carries the cysteine amide modification.

In terms of tissue distribution, expressed by the venom gland.

The protein localises to the secreted. Functionally, alpha toxins bind voltage-independently at site-3 of sodium channels (Nav) and inhibit the inactivation of the activated channels, thereby blocking neuronal transmission. Is toxic to mice. This Tityus stigmurus (Brazilian scorpion) protein is Toxin Tst2.